A 182-amino-acid chain; its full sequence is MSENEVKDPRIDGIKTKIRVVPDFPKKGIMFQDITTLLLDPKAFKDTIDLFVERYRDMNISVVAGIEARGFIFGSPIALAIGAKFVPLRKPKKLPGQIIFEEYELEYGSDRLEMHVEAVDSGDRALVVDDLIATGGTLCAAMNLLKRVGAEVIECACVIELPELKGRERLEGKPLYVLVEYR.

This sequence belongs to the purine/pyrimidine phosphoribosyltransferase family. Homodimer.

The protein resides in the cytoplasm. The catalysed reaction is AMP + diphosphate = 5-phospho-alpha-D-ribose 1-diphosphate + adenine. Its pathway is purine metabolism; AMP biosynthesis via salvage pathway; AMP from adenine: step 1/1. In terms of biological role, catalyzes a salvage reaction resulting in the formation of AMP, that is energically less costly than de novo synthesis. May contribute to the recycling of adenine into adenylate nucleotides and the inactivation of cytokinins by phosphoribosylation. Possesses low activity toward adenine, but can efficiently convert cytokinins from free bases (active form) to the corresponding nucleotides (inactive form). This chain is Adenine phosphoribosyltransferase 4 (APT4), found in Arabidopsis thaliana (Mouse-ear cress).